We begin with the raw amino-acid sequence, 2157 residues long: Unconventional myosin-IXb (2157 aa).

Serine 2 bears the N-acetylserine mark. A Ras-associating domain is found at alanine 15–alanine 114. Residues alanine 146–histidine 953 enclose the Myosin motor domain. ATP is bound at residue glycine 239–threonine 246. The segment at alanine 709–proline 734 is disordered. Phosphoserine is present on residues serine 716 and serine 717. The segment at lysine 844–serine 855 is actin-binding. The neck or regulatory domain stretch occupies residues leucine 940–phenylalanine 1044. 4 consecutive IQ domains span residues valine 957–leucine 977, methionine 979–glutamate 1000, arginine 1001–histidine 1023, and glutamine 1024–lysine 1053. The residue at position 1045 (serine 1045) is a Phosphoserine. The interval serine 1045–glycine 2157 is tail. The stretch at glutamine 1046–glutamate 1071 forms a coiled coil. Disordered stretches follow at residues glutamine 1046 to glutamine 1298, alanine 1320 to valine 1410, and glycine 1455 to arginine 1484. 5 stretches are compositionally biased toward basic and acidic residues: residues glutamate 1050–glutamate 1063, serine 1109–serine 1122, glutamate 1136–lysine 1160, serine 1168–threonine 1183, and leucine 1191–glutamate 1201. 3 positions are modified to phosphoserine: serine 1114, serine 1115, and serine 1122. The segment covering glutamate 1211–proline 1222 has biased composition (polar residues). A phosphoserine mark is found at serine 1242, serine 1253, serine 1261, and serine 1267. Residue threonine 1271 is modified to Phosphothreonine. 3 positions are modified to phosphoserine: serine 1290, serine 1323, and serine 1331. Phosphothreonine is present on threonine 1346. Phosphoserine is present on residues serine 1354, serine 1356, and serine 1405. The segment covering alanine 1467 to glycine 1478 has biased composition (basic and acidic residues). Residues glycine 1632–cysteine 1681 form a Phorbol-ester/DAG-type zinc finger. The Rho-GAP domain maps to aspartate 1703–tyrosine 1888. The interval alanine 1739 to arginine 1744 is interaction with RHOA. The stretch at leucine 1880–alanine 1901 forms a coiled coil. 4 positions are modified to phosphoserine: serine 1926, serine 1972, serine 1992, and serine 1999. Positions glutamate 1959–proline 1989 form a coiled coil. Residues isoleucine 1980 to aspartate 1993 are compositionally biased toward basic and acidic residues. Residues isoleucine 1980–glycine 2157 form a disordered region. Threonine 2005 carries the post-translational modification Phosphothreonine. Residues proline 2021 to leucine 2037 show a composition bias toward pro residues. Serine 2050 carries the post-translational modification Phosphoserine. Residues proline 2081–proline 2093 show a composition bias toward low complexity. A compositionally biased stretch (basic and acidic residues) spans arginine 2095–glutamine 2106. The residue at position 2141 (serine 2141) is a Phosphoserine.

It belongs to the TRAFAC class myosin-kinesin ATPase superfamily. Myosin family. In terms of assembly, interacts (via IQ domains) with CALM. Interacts with RHOA. Interacts (via Rho-GAP domain) with ROBO1; this inhibits the interaction with RHOA and the stimulation of RHOA GTPase activity, and thereby increases the levels of active RHOA. In terms of tissue distribution, detected in peripheral blood leukocytes (at protein level). Expressed predominantly in peripheral blood leukocytes and at lower levels, in thymus, spleen, testis, prostate, ovary, brain, small intestine and lung.

It is found in the cytoplasm. The protein localises to the cell cortex. Its subcellular location is the perinuclear region. It localises to the cytoskeleton. Myosins are actin-based motor molecules with ATPase activity. Unconventional myosins serve in intracellular movements. Binds actin with high affinity both in the absence and presence of ATP and its mechanochemical activity is inhibited by calcium ions. Also acts as a GTPase activator for RHOA. Plays a role in the regulation of cell migration via its role as RHOA GTPase activator. This is regulated by its interaction with the SLIT2 receptor ROBO1; interaction with ROBO1 impairs interaction with RHOA and subsequent activation of RHOA GTPase activity, and thereby leads to increased levels of active, GTP-bound RHOA. This chain is Unconventional myosin-IXb (MYO9B), found in Homo sapiens (Human).